Consider the following 923-residue polypeptide: Mitochondrial 10-formyltetrahydrofolate dehydrogenase (923 aa).

Residues 1 to 19 constitute a mitochondrion; not cleaved transit peptide; that stretch reads MLWRGSQALRHFSTSRVYF. A hydrolase domain region spans residues 23–331; it reads LKLALIGQSL…PASQYFSAGE (309 aa). Phosphoserine is present on serine 31. At lysine 60 the chain carries N6-succinyllysine. 110 to 112 serves as a coordination point for (6R)-10-formyltetrahydrofolate; it reads QFI. The active-site Proton donor is the histidine 128. Aspartate 164 is a (6R)-10-formyltetrahydrofolate binding site. The 78-residue stretch at 339-416 folds into the Carrier domain; it reads AEELKVAETI…DFIQKVVRRL (78 aa). Serine 375 is modified (O-(pantetheine 4'-phosphoryl)serine). Residues 438–923 are aldehyde dehydrogenase domain; the sequence is TVKIPYQCFI…LKIKTVTLEY (486 aa). NADP(+) is bound by residues 592–594 and 618–621; these read IPW and KPAQ. Serine 650 carries the post-translational modification Phosphoserine. Residues 651–656 and 671–672 each bind NADP(+); these read GGVAGQ and GS. An N6-succinyllysine modification is found at lysine 681. Glutamate 694 (proton acceptor) is an active-site residue. 694 to 695 lines the NADP(+) pocket; sequence EL. The active-site Proton donor is the cysteine 728. NADP(+) contacts are provided by residues lysine 778 and 825 to 827; that span reads ESF. Lysine 903 bears the N6-acetyllysine mark.

It in the N-terminal section; belongs to the GART family. In the C-terminal section; belongs to the aldehyde dehydrogenase family. ALDH1L subfamily. In terms of processing, phosphopantetheinylation at Ser-375 by AASDHPPT is required for the formyltetrahydrofolate dehydrogenase activity.

It localises to the mitochondrion. The catalysed reaction is (6R)-10-formyltetrahydrofolate + NADP(+) + H2O = (6S)-5,6,7,8-tetrahydrofolate + CO2 + NADPH + H(+). Its function is as follows. Mitochondrial 10-formyltetrahydrofolate dehydrogenase that catalyzes the NADP(+)-dependent conversion of 10-formyltetrahydrofolate to tetrahydrofolate and carbon dioxide. This is Mitochondrial 10-formyltetrahydrofolate dehydrogenase from Mus musculus (Mouse).